Reading from the N-terminus, the 555-residue chain is Putative polyketide hydroxylase (555 aa).

FAD-binding positions include 16–45 (PVLVVGGSLVGLSTSVFLGRLGVRHMLVER) and 303–313 (YRAGRVFLAGD). The interval 366–395 (ATTARAAARSAEHSHPGFAPPPGTSGGPQG) is disordered.

This sequence belongs to the PheA/TfdB FAD monooxygenase family. It depends on FAD as a cofactor.

Its function is as follows. Involved in developmentally regulated synthesis of a compound biosynthetically related to polyketide antibiotics which is essential for spore color in Streptomyces halstedii. The protein is Putative polyketide hydroxylase (schC) of Streptomyces halstedii.